A 121-amino-acid polypeptide reads, in one-letter code: Small ribosomal subunit protein uS13 (121 aa).

The disordered stretch occupies residues 89–121; the sequence is RRHRMSLPVRGQRTRTNARTRRGSRKTVAGRKK. Positions 100–121 are enriched in basic residues; sequence QRTRTNARTRRGSRKTVAGRKK.

Belongs to the universal ribosomal protein uS13 family. As to quaternary structure, part of the 30S ribosomal subunit. Forms a loose heterodimer with protein S19. Forms two bridges to the 50S subunit in the 70S ribosome.

In terms of biological role, located at the top of the head of the 30S subunit, it contacts several helices of the 16S rRNA. In the 70S ribosome it contacts the 23S rRNA (bridge B1a) and protein L5 of the 50S subunit (bridge B1b), connecting the 2 subunits; these bridges are implicated in subunit movement. Contacts the tRNAs in the A and P-sites. This Prochlorococcus marinus subsp. pastoris (strain CCMP1986 / NIES-2087 / MED4) protein is Small ribosomal subunit protein uS13.